We begin with the raw amino-acid sequence, 189 residues long: Selenoprotein S (189 aa).

A helical transmembrane segment spans residues 28–48 (SLLATYGWYIVFSCILLYVVF). The tract at residues 78–90 (RQEALAAARLKMQ) is VCP/p97-interacting motif (VIM). Positions 115-189 (KIEMWDSMQE…RRGPSSGGUG (75 aa)) are disordered. Ser-140 is modified (phosphoserine). Residues 159–173 (RGGGYNPLSGEGGGA) show a composition bias toward gly residues. Position 188 (Sec-188) is a non-standard amino acid, selenocysteine.

Belongs to the selenoprotein S family. Interacts with DERL1 and (via VIM motif) with VCP, suggesting that it forms a membrane complex with DERL1 that serves as a receptor for VCP. Also interacts with DERL2, DERL3 and SELENOK. The SELENOK-SELENOS complex interacts with VCP. Interacts with CCDC47. Post-translationally, truncated SELENOS proteins produced by failed UGA/Sec decoding are ubiquitinated by the CRL2(KLHDC2) and CRL2(KLHDC3) complexes, which recognizes the glycine (Gly) at the C-terminus of truncated SELENOS proteins. Truncated SELENOS proteins produced by failed UGA/Sec decoding are also ubiquitinated by the CRL5(KLHDC1) complex.

It localises to the endoplasmic reticulum membrane. Its subcellular location is the cytoplasm. In terms of biological role, involved in the degradation process of misfolded endoplasmic reticulum (ER) luminal proteins. Participates in the transfer of misfolded proteins from the ER to the cytosol, where they are destroyed by the proteasome in a ubiquitin-dependent manner. Probably acts by serving as a linker between DERL1, which mediates the retrotranslocation of misfolded proteins into the cytosol, and the ATPase complex VCP, which mediates the translocation and ubiquitination. This is Selenoprotein S from Homo sapiens (Human).